A 503-amino-acid polypeptide reads, in one-letter code: MDFSIKGCDWSKGEAKGFLTGKSDCIVLGIFEAQTLSGAALDIDTATKGLISRVVKAGDMDGKRGKTLFLPEVSGIGASRVLLVGLGKQDAFNQKAYNDAVTAAWRALLATKVVQVTFTLAQLPVDERGSDWGVRAAILALRNETYRFTQMKSKPEPVSHTLKRVVFSVEPADEKAAKVAVKQAVALANGMDLTRDLGNLPGNVCTPTYLANTAKQLAKDWGMKAEVLGLKQIQALKMGSFLSVARASVEPPQFIVLHYQGAAAKAAPIVLVGKGITFDTGGISLKPGEGMDEMKYDMCGAGSVLGTIRAVAEMGLKLNVVGIIPTCENMPGGNATKPGDVVTSMKGLTIEVLNTDAEGRLILCDALTYAERFKPAAVIDIATLTGACIIALGHHNSGLFSKDDALAGELLDASREANDPAWRLPLDDEYQDQLKSNFADLANIGGRPAGSVTAACFLSRFTENYPWAHLDIAGTAWKSGAAKGATGRPVPLLAQFLIDRAGQ.

Residues Lys-274 and Asp-279 each coordinate Mn(2+). Lys-286 is a catalytic residue. Mn(2+)-binding residues include Asp-297, Asp-356, and Glu-358. Residue Arg-360 is part of the active site.

The protein belongs to the peptidase M17 family. Mn(2+) serves as cofactor.

The protein localises to the cytoplasm. It catalyses the reaction Release of an N-terminal amino acid, Xaa-|-Yaa-, in which Xaa is preferably Leu, but may be other amino acids including Pro although not Arg or Lys, and Yaa may be Pro. Amino acid amides and methyl esters are also readily hydrolyzed, but rates on arylamides are exceedingly low.. The catalysed reaction is Release of an N-terminal amino acid, preferentially leucine, but not glutamic or aspartic acids.. Presumably involved in the processing and regular turnover of intracellular proteins. Catalyzes the removal of unsubstituted N-terminal amino acids from various peptides. The sequence is that of Probable cytosol aminopeptidase from Burkholderia multivorans (strain ATCC 17616 / 249).